A 380-amino-acid polypeptide reads, in one-letter code: Cytochrome b (380 aa).

The next 4 membrane-spanning stretches (helical) occupy residues Phe-34–Met-54, Trp-78–Ile-99, Trp-114–Leu-134, and Phe-179–Thr-199. Residues His-84 and His-98 each contribute to the heme b site. His-183 and His-197 together coordinate heme b. A ubiquinone is bound at residue His-202. A run of 4 helical transmembrane segments spans residues Thr-227–Ser-247, Leu-289–His-309, Leu-321–Ser-341, and Phe-348–Pro-368.

It belongs to the cytochrome b family. In terms of assembly, the cytochrome bc1 complex contains 11 subunits: 3 respiratory subunits (MT-CYB, CYC1 and UQCRFS1), 2 core proteins (UQCRC1 and UQCRC2) and 6 low-molecular weight proteins (UQCRH/QCR6, UQCRB/QCR7, UQCRQ/QCR8, UQCR10/QCR9, UQCR11/QCR10 and a cleavage product of UQCRFS1). This cytochrome bc1 complex then forms a dimer. It depends on heme b as a cofactor.

The protein resides in the mitochondrion inner membrane. Its function is as follows. Component of the ubiquinol-cytochrome c reductase complex (complex III or cytochrome b-c1 complex) that is part of the mitochondrial respiratory chain. The b-c1 complex mediates electron transfer from ubiquinol to cytochrome c. Contributes to the generation of a proton gradient across the mitochondrial membrane that is then used for ATP synthesis. The protein is Cytochrome b (MT-CYB) of Amazilia tzacatl (Rufous-tailed hummingbird).